The primary structure comprises 301 residues: N-acetylmuramic acid 6-phosphate etherase (301 aa).

Residues 57-220 enclose the SIS domain; the sequence is IAETFMKNGR…TTGAMIKTGK (164 aa). Glu85 functions as the Proton donor in the catalytic mechanism. The active site involves Glu116.

This sequence belongs to the GCKR-like family. MurNAc-6-P etherase subfamily. Homodimer.

The catalysed reaction is N-acetyl-D-muramate 6-phosphate + H2O = N-acetyl-D-glucosamine 6-phosphate + (R)-lactate. The protein operates within amino-sugar metabolism; 1,6-anhydro-N-acetylmuramate degradation. It functions in the pathway amino-sugar metabolism; N-acetylmuramate degradation. Its pathway is cell wall biogenesis; peptidoglycan recycling. Functionally, specifically catalyzes the cleavage of the D-lactyl ether substituent of MurNAc 6-phosphate, producing GlcNAc 6-phosphate and D-lactate. Together with AnmK, is also required for the utilization of anhydro-N-acetylmuramic acid (anhMurNAc) either imported from the medium or derived from its own cell wall murein, and thus plays a role in cell wall recycling. This Pasteurella multocida (strain Pm70) protein is N-acetylmuramic acid 6-phosphate etherase.